The primary structure comprises 387 residues: Eukaryotic translation initiation factor 3 subunit M (387 aa).

A PCI domain is found at Arg181 to His340.

This sequence belongs to the eIF-3 subunit M family. As to quaternary structure, component of the eukaryotic translation initiation factor 3 (eIF-3) complex. The eIF-3 complex interacts with pix.

The protein localises to the cytoplasm. The protein resides in the golgi apparatus. Functionally, component of the eukaryotic translation initiation factor 3 (eIF-3) complex, which is involved in protein synthesis of a specialized repertoire of mRNAs and, together with other initiation factors, stimulates binding of mRNA and methionyl-tRNAi to the 40S ribosome. The eIF-3 complex specifically targets and initiates translation of a subset of mRNAs involved in cell proliferation. The sequence is that of Eukaryotic translation initiation factor 3 subunit M from Drosophila willistoni (Fruit fly).